Here is a 228-residue protein sequence, read N- to C-terminus: 2,3-bisphosphoglycerate-dependent phosphoglycerate mutase (228 aa).

Residues 8 to 15, 21 to 22, R60, 87 to 90, K98, 114 to 115, and 183 to 184 contribute to the substrate site; these read RHGQSEWN, TG, ERHY, RR, and GN. H9 serves as the catalytic Tele-phosphohistidine intermediate. The active-site Proton donor/acceptor is E87.

This sequence belongs to the phosphoglycerate mutase family. BPG-dependent PGAM subfamily.

The enzyme catalyses (2R)-2-phosphoglycerate = (2R)-3-phosphoglycerate. It functions in the pathway carbohydrate degradation; glycolysis; pyruvate from D-glyceraldehyde 3-phosphate: step 3/5. In terms of biological role, catalyzes the interconversion of 2-phosphoglycerate and 3-phosphoglycerate. The chain is 2,3-bisphosphoglycerate-dependent phosphoglycerate mutase from Staphylococcus haemolyticus (strain JCSC1435).